The sequence spans 526 residues: Peptide chain release factor 3 (526 aa).

Positions 9 to 277 constitute a tr-type G domain; the sequence is DKRRTFAIIS…GIVEWAPKPL (269 aa). Residues 18 to 25, 86 to 90, and 140 to 143 each bind GTP; these read SHPDAGKT, DTPGH, and NKLD.

It belongs to the TRAFAC class translation factor GTPase superfamily. Classic translation factor GTPase family. PrfC subfamily.

The protein localises to the cytoplasm. Increases the formation of ribosomal termination complexes and stimulates activities of RF-1 and RF-2. It binds guanine nucleotides and has strong preference for UGA stop codons. It may interact directly with the ribosome. The stimulation of RF-1 and RF-2 is significantly reduced by GTP and GDP, but not by GMP. This Shewanella putrefaciens (strain CN-32 / ATCC BAA-453) protein is Peptide chain release factor 3.